A 155-amino-acid chain; its full sequence is Protein SREK1IP1 (155 aa).

The segment at 13 to 30 (AGCKKCGYPGHLTFECRN) adopts a CCHC-type zinc-finger fold. The disordered stretch occupies residues 43 to 155 (DVSSTSTEDS…SSSSQSSSSD (113 aa)). Residues 58–74 (EVARAPADKKNVTDTGK) show a composition bias toward basic and acidic residues. The span at 75-93 (KKLKRKKEKKLKKHRKRLH) shows a compositional bias: basic residues. Positions 94–103 (SSSESDDNSK) are enriched in basic and acidic residues. Residues 104-137 (AKKRKSQKKEKRVKHKAKKGKQHKKDKRKEKRER) show a composition bias toward basic residues. A compositionally biased stretch (low complexity) spans 140-155 (SSSSSSSSSSQSSSSD).

In terms of biological role, possible splicing regulator involved in the control of cellular survival. This Xenopus tropicalis (Western clawed frog) protein is Protein SREK1IP1 (srek1ip1).